The primary structure comprises 1413 residues: DNA-directed RNA polymerase subunit beta' (1413 aa).

Zn(2+) contacts are provided by C70, C72, C85, and C88. D460, D462, and D464 together coordinate Mg(2+). C819, C893, C900, and C903 together coordinate Zn(2+).

This sequence belongs to the RNA polymerase beta' chain family. As to quaternary structure, the RNAP catalytic core consists of 2 alpha, 1 beta, 1 beta' and 1 omega subunit. When a sigma factor is associated with the core the holoenzyme is formed, which can initiate transcription. Mg(2+) is required as a cofactor. It depends on Zn(2+) as a cofactor.

The enzyme catalyses RNA(n) + a ribonucleoside 5'-triphosphate = RNA(n+1) + diphosphate. Its function is as follows. DNA-dependent RNA polymerase catalyzes the transcription of DNA into RNA using the four ribonucleoside triphosphates as substrates. This chain is DNA-directed RNA polymerase subunit beta', found in Burkholderia multivorans (strain ATCC 17616 / 249).